The sequence spans 329 residues: Beta-ketoacyl-[acyl-carrier-protein] synthase III (329 aa).

Residues Cys112 and His253 contribute to the active site. The interval Gln254–Arg258 is ACP-binding. Asn283 is an active-site residue.

The protein belongs to the thiolase-like superfamily. FabH family. As to quaternary structure, homodimer.

It localises to the cytoplasm. The catalysed reaction is malonyl-[ACP] + acetyl-CoA + H(+) = 3-oxobutanoyl-[ACP] + CO2 + CoA. Its pathway is lipid metabolism; fatty acid biosynthesis. Catalyzes the condensation reaction of fatty acid synthesis by the addition to an acyl acceptor of two carbons from malonyl-ACP. Catalyzes the first condensation reaction which initiates fatty acid synthesis and may therefore play a role in governing the total rate of fatty acid production. Possesses both acetoacetyl-ACP synthase and acetyl transacylase activities. Its substrate specificity determines the biosynthesis of branched-chain and/or straight-chain of fatty acids. The polypeptide is Beta-ketoacyl-[acyl-carrier-protein] synthase III (Gloeobacter violaceus (strain ATCC 29082 / PCC 7421)).